A 274-amino-acid chain; its full sequence is 4-hydroxy-tetrahydrodipicolinate reductase (274 aa).

An NAD(+)-binding site is contributed by 7–12; it reads GVTGRM. Residue arginine 40 participates in NADP(+) binding. NAD(+)-binding positions include 103 to 105 and 127 to 130; these read GTT and SANF. Catalysis depends on histidine 160, which acts as the Proton donor/acceptor. Position 161 (histidine 161) interacts with (S)-2,3,4,5-tetrahydrodipicolinate. The active-site Proton donor is the lysine 164. 170–171 provides a ligand contact to (S)-2,3,4,5-tetrahydrodipicolinate; it reads GT.

This sequence belongs to the DapB family. As to quaternary structure, homotetramer.

The protein resides in the cytoplasm. It carries out the reaction (S)-2,3,4,5-tetrahydrodipicolinate + NAD(+) + H2O = (2S,4S)-4-hydroxy-2,3,4,5-tetrahydrodipicolinate + NADH + H(+). The enzyme catalyses (S)-2,3,4,5-tetrahydrodipicolinate + NADP(+) + H2O = (2S,4S)-4-hydroxy-2,3,4,5-tetrahydrodipicolinate + NADPH + H(+). Its pathway is amino-acid biosynthesis; L-lysine biosynthesis via DAP pathway; (S)-tetrahydrodipicolinate from L-aspartate: step 4/4. Functionally, catalyzes the conversion of 4-hydroxy-tetrahydrodipicolinate (HTPA) to tetrahydrodipicolinate. This is 4-hydroxy-tetrahydrodipicolinate reductase from Blochmanniella floridana.